A 602-amino-acid chain; its full sequence is Elongation factor 4 (602 aa).

Positions 7–189 constitute a tr-type G domain; the sequence is KYIRNFSIVA…AIVNKVPAPD (183 aa). GTP contacts are provided by residues 19–24 and 136–139; these read DHGKST and NKID.

The protein belongs to the TRAFAC class translation factor GTPase superfamily. Classic translation factor GTPase family. LepA subfamily.

The protein resides in the cell membrane. The enzyme catalyses GTP + H2O = GDP + phosphate + H(+). Its function is as follows. Required for accurate and efficient protein synthesis under certain stress conditions. May act as a fidelity factor of the translation reaction, by catalyzing a one-codon backward translocation of tRNAs on improperly translocated ribosomes. Back-translocation proceeds from a post-translocation (POST) complex to a pre-translocation (PRE) complex, thus giving elongation factor G a second chance to translocate the tRNAs correctly. Binds to ribosomes in a GTP-dependent manner. In Clostridium botulinum (strain 657 / Type Ba4), this protein is Elongation factor 4.